The following is an 864-amino-acid chain: Probable beta-glucosidase J (864 aa).

Asp233 is an active-site residue. One can recognise a PA14 domain in the interval 411-578 (TGEPGYTFRV…DTDAAIQQAV (168 aa)). N-linked (GlcNAc...) asparagine glycans are attached at residues Asn434, Asn447, and Asn503.

The protein belongs to the glycosyl hydrolase 3 family.

Its subcellular location is the secreted. It catalyses the reaction Hydrolysis of terminal, non-reducing beta-D-glucosyl residues with release of beta-D-glucose.. The protein operates within glycan metabolism; cellulose degradation. Functionally, beta-glucosidases are one of a number of cellulolytic enzymes involved in the degradation of cellulosic biomass. Catalyzes the last step releasing glucose from the inhibitory cellobiose. The chain is Probable beta-glucosidase J (bglJ) from Neosartorya fischeri (strain ATCC 1020 / DSM 3700 / CBS 544.65 / FGSC A1164 / JCM 1740 / NRRL 181 / WB 181) (Aspergillus fischerianus).